The chain runs to 301 residues: 33 kDa chaperonin (301 aa).

2 disulfides stabilise this stretch: Cys239/Cys241 and Cys272/Cys275.

This sequence belongs to the HSP33 family. Post-translationally, under oxidizing conditions two disulfide bonds are formed involving the reactive cysteines. Under reducing conditions zinc is bound to the reactive cysteines and the protein is inactive.

The protein resides in the cytoplasm. Its function is as follows. Redox regulated molecular chaperone. Protects both thermally unfolding and oxidatively damaged proteins from irreversible aggregation. Plays an important role in the bacterial defense system toward oxidative stress. In Nostoc punctiforme (strain ATCC 29133 / PCC 73102), this protein is 33 kDa chaperonin.